Here is a 103-residue protein sequence, read N- to C-terminus: Iron-sulfur cluster assembly protein CyaY (103 aa).

The protein belongs to the frataxin family.

Involved in iron-sulfur (Fe-S) cluster assembly. May act as a regulator of Fe-S biogenesis. The sequence is that of Iron-sulfur cluster assembly protein CyaY from Rickettsia africae (strain ESF-5).